The following is a 369-amino-acid chain: Putative agmatine deiminase 2 (369 aa).

The Amidino-cysteine intermediate role is filled by Cys356.

The protein belongs to the agmatine deiminase family.

It catalyses the reaction agmatine + H2O = N-carbamoylputrescine + NH4(+). The protein is Putative agmatine deiminase 2 of Listeria monocytogenes serovar 1/2a (strain ATCC BAA-679 / EGD-e).